The primary structure comprises 298 residues: Cyanophycinase (298 aa).

Residues Ser155, Glu173, and His197 each act as charge relay system in the active site.

Belongs to the peptidase S51 family.

It carries out the reaction [L-4-(L-arginin-2-N-yl)aspartate](n) + H2O = [L-4-(L-arginin-2-N-yl)aspartate](n-1) + L-4-(L-arginin-2-N-yl)aspartate. Exopeptidase that catalyzes the hydrolytic cleavage of multi-L-arginyl-poly-L-aspartic acid (cyanophycin; a water-insoluble reserve polymer) into aspartate-arginine dipeptides. The protein is Cyanophycinase (cphB) of Nostoc sp. (strain PCC 7120 / SAG 25.82 / UTEX 2576).